The sequence spans 475 residues: Ribulose bisphosphate carboxylase large chain (475 aa).

The propeptide occupies 1–2 (MS). N-acetylproline is present on P3. An N6,N6,N6-trimethyllysine modification is found at K14. Substrate-binding residues include N123 and T173. K175 functions as the Proton acceptor in the catalytic mechanism. K177 lines the substrate pocket. Positions 201, 203, and 204 each coordinate Mg(2+). K201 bears the N6-carboxylysine mark. H294 acts as the Proton acceptor in catalysis. R295, H327, and S379 together coordinate substrate.

Belongs to the RuBisCO large chain family. Type I subfamily. Heterohexadecamer of 8 large chains and 8 small chains. Mg(2+) is required as a cofactor.

The protein resides in the plastid. It is found in the chloroplast. It carries out the reaction 2 (2R)-3-phosphoglycerate + 2 H(+) = D-ribulose 1,5-bisphosphate + CO2 + H2O. It catalyses the reaction D-ribulose 1,5-bisphosphate + O2 = 2-phosphoglycolate + (2R)-3-phosphoglycerate + 2 H(+). Its function is as follows. RuBisCO catalyzes two reactions: the carboxylation of D-ribulose 1,5-bisphosphate, the primary event in carbon dioxide fixation, as well as the oxidative fragmentation of the pentose substrate in the photorespiration process. Both reactions occur simultaneously and in competition at the same active site. The polypeptide is Ribulose bisphosphate carboxylase large chain (Chlorella vulgaris (Green alga)).